The sequence spans 616 residues: Replication protein A 70 kDa DNA-binding subunit (616 aa).

Position 1 is an N-acetylmethionine (Met-1). Glycyl lysine isopeptide (Lys-Gly) (interchain with G-Cter in ubiquitin) cross-links involve residues Lys-22 and Lys-88. The disordered stretch occupies residues 121–154 (GLGQPQVAPPAPAASPAASSRPQPQNGSSGMGST). The segment covering 134–145 (ASPAASSRPQPQ) has biased composition (low complexity). Lys-163 and Lys-167 each carry N6-acetyllysine; alternate. Glycyl lysine isopeptide (Lys-Gly) (interchain with G-Cter in ubiquitin); alternate cross-links involve residues Lys-163 and Lys-167. The residue at position 180 (Thr-180) is a Phosphothreonine. A Glycyl lysine isopeptide (Lys-Gly) (interchain with G-Cter in ubiquitin) cross-link involves residue Lys-183. Thr-191 carries the phosphothreonine modification. The segment at residues 197 to 281 (WTICARVTNK…VKNDYEMTFN (85 aa)) is a DNA-binding region (OB). Glycyl lysine isopeptide (Lys-Gly) (interchain with G-Cter in ubiquitin) cross-links involve residues Lys-220 and Lys-244. Lys-259 is subject to N6-acetyllysine; alternate. A Glycyl lysine isopeptide (Lys-Gly) (interchain with G-Cter in ubiquitin); alternate cross-link involves residue Lys-259. Residues Lys-267 and Lys-331 each participate in a glycyl lysine isopeptide (Lys-Gly) (interchain with G-Cter in ubiquitin) cross-link. A Phosphoserine modification is found at Ser-384. Glycyl lysine isopeptide (Lys-Gly) (interchain with G-Cter in ubiquitin) cross-links involve residues Lys-410 and Lys-431. Lys-449 participates in a covalent cross-link: Glycyl lysine isopeptide (Lys-Gly) (interchain with G-Cter in SUMO). Residue Lys-458 forms a Glycyl lysine isopeptide (Lys-Gly) (interchain with G-Cter in ubiquitin) linkage. The C4-type zinc finger occupies 481-503 (CPTQDCNKKVIDQQNGLYRCEKC). Lys-553 is covalently cross-linked (Glycyl lysine isopeptide (Lys-Gly) (interchain with G-Cter in ubiquitin)). Lys-577 is covalently cross-linked (Glycyl lysine isopeptide (Lys-Gly) (interchain with G-Cter in SUMO)).

This sequence belongs to the replication factor A protein 1 family. As to quaternary structure, component of the canonical replication protein A complex (RPA), a heterotrimer composed of RPA1, RPA2 and RPA3. Also a component of the aRPA, the alternative replication protein A complex, a trimeric complex similar to the replication protein A complex/RPA but where RPA1 and RPA3 are associated with RPA4 instead of RPA2. The DNA-binding activity may reside exclusively on the RPA1 subunit. Interacts with PRPF19; the PRP19-CDC5L complex is recruited to the sites of DNA repair where it ubiquitinates the replication protein A complex (RPA). Interacts with RIPK1. Interacts with the polymerase alpha subunit POLA1/p180; this interaction stabilizes the replicative complex and reduces the misincorporation rate of DNA polymerase alpha by acting as a fidelity clamp. Interacts with RAD51 and SENP6 to regulate DNA repair. Interacts with HELB; this interaction promotes HELB recruitment to chromatin following DNA damage. Interacts with PRIMPOL; leading to recruit PRIMPOL on chromatin and stimulate its DNA primase activity. Interacts with XPA; the interaction is direct and associates XPA with the RPA complex. Interacts with ETAA1; the interaction is direct and promotes ETAA1 recruitment at stalled replication forks. Interacts with RPA1; this interaction associates HROB with the RPA complex. Interacts (when poly-ADP-ribosylated) with HTATSF1. Interacts with BRIP1/FANCJ via this RPA1 subunit; following DNA damage they colocalize in foci in the nucleus. DNA damage-induced 'Lys-63'-linked polyubiquitination by PRPF19 mediates ATRIP recruitment to the RPA complex at sites of DNA damage and activation of ATR. Ubiquitinated by RFWD3 at stalled replication forks in response to DNA damage: ubiquitination by RFWD3 does not lead to degradation by the proteasome and promotes removal of the RPA complex from stalled replication forks, promoting homologous recombination. In terms of processing, sumoylated on lysine residues Lys-449 and Lys-577, with Lys-449 being the major site. Sumoylation promotes recruitment of RAD51 to the DNA damage foci to initiate DNA repair through homologous recombination. Desumoylated by SENP6. Post-translationally, poly-ADP-ribosylated by PARP1; promoting recruitment of HTATSF1.

Its subcellular location is the nucleus. It localises to the PML body. Functionally, as part of the heterotrimeric replication protein A complex (RPA/RP-A), binds and stabilizes single-stranded DNA intermediates that form during DNA replication or upon DNA stress. It prevents their reannealing and in parallel, recruits and activates different proteins and complexes involved in DNA metabolism. Thereby, it plays an essential role both in DNA replication and the cellular response to DNA damage. In the cellular response to DNA damage, the RPA complex controls DNA repair and DNA damage checkpoint activation. Through recruitment of ATRIP activates the ATR kinase a master regulator of the DNA damage response. It is required for the recruitment of the DNA double-strand break repair factors RAD51 and RAD52 to chromatin in response to DNA damage. Also recruits to sites of DNA damage proteins like XPA and XPG that are involved in nucleotide excision repair and is required for this mechanism of DNA repair. Also plays a role in base excision repair (BER) probably through interaction with UNG. Also recruits SMARCAL1/HARP, which is involved in replication fork restart, to sites of DNA damage. Plays a role in telomere maintenance. As part of the alternative replication protein A complex, aRPA, binds single-stranded DNA and probably plays a role in DNA repair. Compared to the RPA2-containing, canonical RPA complex, may not support chromosomal DNA replication and cell cycle progression through S-phase. The aRPA may not promote efficient priming by DNA polymerase alpha but could support DNA synthesis by polymerase delta in presence of PCNA and replication factor C (RFC), the dual incision/excision reaction of nucleotide excision repair and RAD51-dependent strand exchange. RPA stimulates 5'-3' helicase activity of the BRIP1/FANCJ. This Homo sapiens (Human) protein is Replication protein A 70 kDa DNA-binding subunit (RPA1).